Consider the following 468-residue polypeptide: ATP synthase subunit beta (468 aa).

ATP is bound at residue 148 to 155 (GGAGVGKT).

Belongs to the ATPase alpha/beta chains family. As to quaternary structure, F-type ATPases have 2 components, CF(1) - the catalytic core - and CF(0) - the membrane proton channel. CF(1) has five subunits: alpha(3), beta(3), gamma(1), delta(1), epsilon(1). CF(0) has three main subunits: a(1), b(2) and c(9-12). The alpha and beta chains form an alternating ring which encloses part of the gamma chain. CF(1) is attached to CF(0) by a central stalk formed by the gamma and epsilon chains, while a peripheral stalk is formed by the delta and b chains.

The protein localises to the cell inner membrane. It carries out the reaction ATP + H2O + 4 H(+)(in) = ADP + phosphate + 5 H(+)(out). Produces ATP from ADP in the presence of a proton gradient across the membrane. The catalytic sites are hosted primarily by the beta subunits. This is ATP synthase subunit beta from Xanthomonas oryzae pv. oryzae (strain KACC10331 / KXO85).